We begin with the raw amino-acid sequence, 314 residues long: (-)-isopiperitenone reductase (314 aa).

10-33 (VTGANKGIGFEICRQLAEKGIIVI) contacts NADP(+). Position 182 (S182) interacts with substrate.

The protein belongs to the short-chain dehydrogenases/reductases (SDR) family.

It is found in the cytoplasm. The catalysed reaction is (2R,5R)-isopulegone + NADP(+) = (6R)-isopiperitenone + NADPH + H(+). It participates in secondary metabolite biosynthesis; terpenoid biosynthesis. Its function is as follows. Monoterpene synthase that catalyzes the specific reduction of the 1(2)-double bond of (-)-isopiperitenone to produce (+)-cis-isopulegone. Does not catalyze the reverse reaction. Unable to reduce (+)-pulegone, (+)-cis-isopulegone, (-)-menthone or the 1,2-double bond of (-)-carvone. Able to utilize NADH with 20% the efficiency of NADPH. This chain is (-)-isopiperitenone reductase, found in Mentha piperita (Peppermint).